The following is a 347-amino-acid chain: Phosphoribosylformylglycinamidine cyclo-ligase (347 aa).

This sequence belongs to the AIR synthase family.

It is found in the cytoplasm. It catalyses the reaction 2-formamido-N(1)-(5-O-phospho-beta-D-ribosyl)acetamidine + ATP = 5-amino-1-(5-phospho-beta-D-ribosyl)imidazole + ADP + phosphate + H(+). It participates in purine metabolism; IMP biosynthesis via de novo pathway; 5-amino-1-(5-phospho-D-ribosyl)imidazole from N(2)-formyl-N(1)-(5-phospho-D-ribosyl)glycinamide: step 2/2. The sequence is that of Phosphoribosylformylglycinamidine cyclo-ligase from Prochlorococcus marinus (strain MIT 9215).